A 306-amino-acid polypeptide reads, in one-letter code: Aspartate carbamoyltransferase catalytic subunit (306 aa).

Residues Arg-53 and Thr-54 each contribute to the carbamoyl phosphate site. Lys-82 lines the L-aspartate pocket. Arg-103, His-131, and Gln-134 together coordinate carbamoyl phosphate. Positions 164 and 226 each coordinate L-aspartate. 2 residues coordinate carbamoyl phosphate: Leu-263 and Pro-264.

This sequence belongs to the aspartate/ornithine carbamoyltransferase superfamily. ATCase family. Heterododecamer (2C3:3R2) of six catalytic PyrB chains organized as two trimers (C3), and six regulatory PyrI chains organized as three dimers (R2).

It catalyses the reaction carbamoyl phosphate + L-aspartate = N-carbamoyl-L-aspartate + phosphate + H(+). It functions in the pathway pyrimidine metabolism; UMP biosynthesis via de novo pathway; (S)-dihydroorotate from bicarbonate: step 2/3. In terms of biological role, catalyzes the condensation of carbamoyl phosphate and aspartate to form carbamoyl aspartate and inorganic phosphate, the committed step in the de novo pyrimidine nucleotide biosynthesis pathway. The protein is Aspartate carbamoyltransferase catalytic subunit of Methanocaldococcus jannaschii (strain ATCC 43067 / DSM 2661 / JAL-1 / JCM 10045 / NBRC 100440) (Methanococcus jannaschii).